Reading from the N-terminus, the 545-residue chain is Glucose-6-phosphate isomerase (545 aa).

Catalysis depends on glutamate 351, which acts as the Proton donor. Active-site residues include histidine 382 and lysine 510.

This sequence belongs to the GPI family.

It localises to the cytoplasm. It catalyses the reaction alpha-D-glucose 6-phosphate = beta-D-fructose 6-phosphate. Its pathway is carbohydrate biosynthesis; gluconeogenesis. It functions in the pathway carbohydrate degradation; glycolysis; D-glyceraldehyde 3-phosphate and glycerone phosphate from D-glucose: step 2/4. Functionally, catalyzes the reversible isomerization of glucose-6-phosphate to fructose-6-phosphate. The protein is Glucose-6-phosphate isomerase of Shewanella baltica (strain OS155 / ATCC BAA-1091).